The sequence spans 142 residues: DNA-directed RNA polymerases I, II, and III subunit rpabc3 (142 aa).

The interval 16 to 40 (DPDGKKFDRVSRFVCYSENYEMDLQ) is non-specific ssDNA binding.

It belongs to the eukaryotic RPB8 RNA polymerase subunit family. As to quaternary structure, component of the RNA polymerase I (Pol I), RNA polymerase II (Pol II) and RNA polymerase III (Pol III) complexes consisting of at least 13, 12 and 17 subunits, respectively. Directly interacts with POLR2A.

Its subcellular location is the nucleus. The protein resides in the nucleolus. Its function is as follows. DNA-dependent RNA polymerase catalyzes the transcription of DNA into RNA using the four ribonucleoside triphosphates as substrates. Common component of RNA polymerases I, II and III which synthesize ribosomal RNA precursors, mRNA precursors and many functional non-coding RNAs, and small RNAs, such as 5S rRNA and tRNAs, respectively. The sequence is that of DNA-directed RNA polymerases I, II, and III subunit rpabc3 (polr2h) from Dictyostelium discoideum (Social amoeba).